A 239-amino-acid polypeptide reads, in one-letter code: 1-(5-phosphoribosyl)-5-[(5-phosphoribosylamino)methylideneamino] imidazole-4-carboxamide isomerase (239 aa).

Aspartate 8 (proton acceptor) is an active-site residue. Aspartate 129 functions as the Proton donor in the catalytic mechanism.

The protein belongs to the HisA/HisF family.

The protein resides in the cytoplasm. The catalysed reaction is 1-(5-phospho-beta-D-ribosyl)-5-[(5-phospho-beta-D-ribosylamino)methylideneamino]imidazole-4-carboxamide = 5-[(5-phospho-1-deoxy-D-ribulos-1-ylimino)methylamino]-1-(5-phospho-beta-D-ribosyl)imidazole-4-carboxamide. It functions in the pathway amino-acid biosynthesis; L-histidine biosynthesis; L-histidine from 5-phospho-alpha-D-ribose 1-diphosphate: step 4/9. The chain is 1-(5-phosphoribosyl)-5-[(5-phosphoribosylamino)methylideneamino] imidazole-4-carboxamide isomerase from Legionella pneumophila (strain Paris).